A 142-amino-acid chain; its full sequence is NCT transcriptional regulatory complex subunit B (142 aa).

This sequence belongs to the NC2 beta/DR1 family. As to quaternary structure, forms the NCT transcriptional regulatory complex with nctA and mot1.

It localises to the nucleus. In terms of biological role, part of the NCT transcriptional regulatory complex that acts as a key regulator of ergosterol biosynthesis and the azole exporter cdr1B. The NCT complex binds the promoters of genes linked to azole susceptibility, and especially represses the expression of cdr1B transporter. The protein is NCT transcriptional regulatory complex subunit B of Aspergillus fumigatus (strain CBS 144.89 / FGSC A1163 / CEA10) (Neosartorya fumigata).